Here is a 222-residue protein sequence, read N- to C-terminus: Methylthioribulose-1-phosphate dehydratase (222 aa).

His94 and His96 together coordinate Zn(2+).

This sequence belongs to the aldolase class II family. MtnB subfamily. Zn(2+) serves as cofactor.

The catalysed reaction is 5-(methylsulfanyl)-D-ribulose 1-phosphate = 5-methylsulfanyl-2,3-dioxopentyl phosphate + H2O. Its pathway is amino-acid biosynthesis; L-methionine biosynthesis via salvage pathway; L-methionine from S-methyl-5-thio-alpha-D-ribose 1-phosphate: step 2/6. Its function is as follows. Catalyzes the dehydration of methylthioribulose-1-phosphate (MTRu-1-P) into 2,3-diketo-5-methylthiopentyl-1-phosphate (DK-MTP-1-P). In Yersinia pseudotuberculosis serotype O:1b (strain IP 31758), this protein is Methylthioribulose-1-phosphate dehydratase.